The chain runs to 106 residues: Large ribosomal subunit protein uL24 (106 aa).

The protein belongs to the universal ribosomal protein uL24 family. Part of the 50S ribosomal subunit.

Functionally, one of two assembly initiator proteins, it binds directly to the 5'-end of the 23S rRNA, where it nucleates assembly of the 50S subunit. Its function is as follows. One of the proteins that surrounds the polypeptide exit tunnel on the outside of the subunit. This is Large ribosomal subunit protein uL24 from Spiroplasma kunkelii.